The primary structure comprises 215 residues: Ribonuclease S-6 (215 aa).

Positions 1–22 are cleaved as a signal peptide; that stretch reads MFNLPLTSVFVIFLFALSPIYG. An RNA-binding site is contributed by Gln-32. Cys-38 and Cys-43 are oxidised to a cystine. Residue Asn-49 is glycosylated (N-linked (GlcNAc...) asparagine). Residue His-53 coordinates RNA. The active-site Proton donor is the His-53. The N-linked (GlcNAc...) asparagine glycan is linked to Asn-59. Cys-67 and Cys-116 are oxidised to a cystine. Residues 91–92, Arg-94, Phe-105, 108–109, and 112–113 each bind RNA; these read DL, RE, and KH. Glu-109 is a catalytic residue. The Proton acceptor role is filled by His-113. 2 N-linked (GlcNAc...) asparagine glycosylation sites follow: Asn-160 and Asn-172. Cystine bridges form between Cys-175–Cys-204 and Cys-187–Cys-198.

It belongs to the RNase T2 family.

It localises to the secreted. The protein localises to the extracellular space. The enzyme catalyses a ribonucleotidyl-ribonucleotide-RNA + H2O = a 3'-end 3'-phospho-ribonucleotide-RNA + a 5'-end dephospho-ribonucleoside-RNA + H(+). In terms of biological role, self-incompatibility (SI) is the inherited ability of a flowering plant to prevent self-fertilization by discriminating between self and non-self pollen during pollination. In many species of the Solanaceae, self-incompatibility is controlled by the single, multiallelic locus S. This stylar glycoprotein is associated with expression of self-incompatibility in potato. In Nicotiana alata (Winged tobacco), this protein is Ribonuclease S-6.